Reading from the N-terminus, the 344-residue chain is Ion-translocating oxidoreductase complex subunit D (344 aa).

The next 4 membrane-spanning stretches (helical) occupy residues 23-43, 44-64, 80-100, and 120-140; these read LVLG…GAGT, LLNL…MLAL, VTAL…LTLV, and PFNP…LEMT. An FMN phosphoryl threonine modification is found at T172. A run of 5 helical transmembrane segments spans residues 198–218, 222–242, 252–272, 285–305, and 306–326; these read LGGA…LFLL, LFTW…SLLF, GSPL…FIVT, LLFG…GGYP, and DGVA…DYYT.

Belongs to the NqrB/RnfD family. As to quaternary structure, the complex is composed of six subunits: RnfA, RnfB, RnfC, RnfD, RnfE and RnfG. It depends on FMN as a cofactor.

The protein localises to the cell inner membrane. Part of a membrane-bound complex that couples electron transfer with translocation of ions across the membrane. The polypeptide is Ion-translocating oxidoreductase complex subunit D (Pseudomonas paraeruginosa (strain DSM 24068 / PA7) (Pseudomonas aeruginosa (strain PA7))).